A 375-amino-acid polypeptide reads, in one-letter code: Queuine tRNA-ribosyltransferase (375 aa).

Residue Asp89 is the Proton acceptor of the active site. Substrate contacts are provided by residues 89-93 (DSGGF), Asp143, Gln187, and Gly214. Positions 245 to 251 (GVGKPED) are RNA binding. The active-site Nucleophile is the Asp264. An RNA binding; important for wobble base 34 recognition region spans residues 269–273 (TRNAR). Zn(2+) contacts are provided by Cys302, Cys304, Cys307, and His333.

Belongs to the queuine tRNA-ribosyltransferase family. In terms of assembly, homodimer. Within each dimer, one monomer is responsible for RNA recognition and catalysis, while the other monomer binds to the replacement base PreQ1. Zn(2+) is required as a cofactor.

The enzyme catalyses 7-aminomethyl-7-carbaguanine + guanosine(34) in tRNA = 7-aminomethyl-7-carbaguanosine(34) in tRNA + guanine. It participates in tRNA modification; tRNA-queuosine biosynthesis. Catalyzes the base-exchange of a guanine (G) residue with the queuine precursor 7-aminomethyl-7-deazaguanine (PreQ1) at position 34 (anticodon wobble position) in tRNAs with GU(N) anticodons (tRNA-Asp, -Asn, -His and -Tyr). Catalysis occurs through a double-displacement mechanism. The nucleophile active site attacks the C1' of nucleotide 34 to detach the guanine base from the RNA, forming a covalent enzyme-RNA intermediate. The proton acceptor active site deprotonates the incoming PreQ1, allowing a nucleophilic attack on the C1' of the ribose to form the product. After dissociation, two additional enzymatic reactions on the tRNA convert PreQ1 to queuine (Q), resulting in the hypermodified nucleoside queuosine (7-(((4,5-cis-dihydroxy-2-cyclopenten-1-yl)amino)methyl)-7-deazaguanosine). The chain is Queuine tRNA-ribosyltransferase from Aliivibrio fischeri (strain ATCC 700601 / ES114) (Vibrio fischeri).